Reading from the N-terminus, the 424-residue chain is Tubby protein homolog 1 (424 aa).

The disordered stretch occupies residues 19-47; it reads MLEDKQKQKRHQSAGSVRTTTTTSSMSMN. Over residues 37 to 47 the composition is skewed to low complexity; the sequence is TTTTTSSMSMN.

The protein belongs to the TUB family. In terms of assembly, interacts with rgb-3.

The protein resides in the cytoplasm. It localises to the cell projection. It is found in the axon. The protein localises to the dendrite. Its subcellular location is the cilium. Functionally, has a role in fat regulation independent of daf-16. Implicated in ciliar sensory function which is required for normal sensory behavior such as chemotaxis. Functions in life span control via the insulin/IGF-1 pathway. Thought to be involved in neuronal trafficking. In Caenorhabditis briggsae, this protein is Tubby protein homolog 1.